The following is a 261-amino-acid chain: Endonuclease NucS (261 aa).

Belongs to the NucS endonuclease family.

It is found in the cytoplasm. In terms of biological role, cleaves both 3' and 5' ssDNA extremities of branched DNA structures. This chain is Endonuclease NucS, found in Aeropyrum pernix (strain ATCC 700893 / DSM 11879 / JCM 9820 / NBRC 100138 / K1).